Reading from the N-terminus, the 121-residue chain is Flagellar protein FliT (121 aa).

A required for homodimerization region spans residues 1–50; the sequence is MNNAPHLYFAWQQLVEKSQLMLRLATEEQWDELIASEMAYVNAVQEIAHL. The fliD binding stretch occupies residues 60 to 98; the sequence is MQEQLRPMLHLILDNESKVKQLLQIRMDELAKLVGQSSV.

This sequence belongs to the FliT family. As to quaternary structure, homodimer. Interacts with FliD and FlhC.

It is found in the cytoplasm. The protein resides in the cytosol. Functionally, dual-function protein that regulates the transcription of class 2 flagellar operons and that also acts as an export chaperone for the filament-capping protein FliD. As a transcriptional regulator, acts as an anti-FlhDC factor; it directly binds FlhC, thus inhibiting the binding of the FlhC/FlhD complex to class 2 promoters, resulting in decreased expression of class 2 flagellar operons. As a chaperone, effects FliD transition to the membrane by preventing its premature polymerization, and by directing it to the export apparatus. The sequence is that of Flagellar protein FliT from Escherichia coli O17:K52:H18 (strain UMN026 / ExPEC).